Consider the following 51-residue polypeptide: Glutamate dehydrogenase (51 aa).

Residue K31 coordinates substrate.

Belongs to the Glu/Leu/Phe/Val dehydrogenases family. In terms of assembly, homohexamer.

It is found in the mitochondrion matrix. The catalysed reaction is L-glutamate + NAD(+) + H2O = 2-oxoglutarate + NH4(+) + NADH + H(+). The enzyme catalyses L-glutamate + NADP(+) + H2O = 2-oxoglutarate + NH4(+) + NADPH + H(+). In terms of biological role, mitochondrial glutamate dehydrogenase that converts L-glutamate into alpha-ketoglutarate. Plays a key role in glutamine anaplerosis by producing alpha-ketoglutarate, an important intermediate in the tricarboxylic acid cycle. This Electrophorus electricus (Electric eel) protein is Glutamate dehydrogenase.